A 234-amino-acid chain; its full sequence is Zinc finger FYVE domain-containing protein 21 (234 aa).

An FYVE-type zinc finger spans residues 44-104 (DKECRRCMQC…QCAECALVSL (61 aa)). Zn(2+)-binding residues include C50, C53, C66, C69, C74, C77, C96, and C99. A PH-like region spans residues 107-234 (AEFYDKQLKV…AKLLYESRDQ (128 aa)).

In terms of assembly, interacts with PTK2/FAK1.

It localises to the cell junction. Its subcellular location is the focal adhesion. It is found in the cytoplasmic vesicle. The protein resides in the endosome. In terms of biological role, plays a role in cell adhesion, and thereby in cell motility which requires repeated formation and disassembly of focal adhesions. Regulates microtubule-induced PTK2/FAK1 dephosphorylation, an event important for focal adhesion disassembly, as well as integrin beta-1/ITGB1 cell surface expression. The sequence is that of Zinc finger FYVE domain-containing protein 21 (ZFYVE21) from Homo sapiens (Human).